We begin with the raw amino-acid sequence, 238 residues long: UPF0758 protein Dtpsy_2777 (238 aa).

The MPN domain maps to 116–238 (VFDSPQAVQH…ALSMAEQGLV (123 aa)). Positions 187, 189, and 200 each coordinate Zn(2+). The JAMM motif motif lies at 187–200 (HNHPSGSVQPSRAD).

The protein belongs to the UPF0758 family.

This Acidovorax ebreus (strain TPSY) (Diaphorobacter sp. (strain TPSY)) protein is UPF0758 protein Dtpsy_2777.